We begin with the raw amino-acid sequence, 597 residues long: Miltiradiene synthase KSL2, chloroplastic (597 aa).

Residues 1 to 51 (MSLAFNLRAIPFSGHTIQSRRGLFPVHESPMITTKPFVAVKCSLTTSTDLM) constitute a chloroplast transit peptide. Mg(2+) is bound by residues Asp329, Asp333, Asn473, and Glu481. A DDXXD motif motif is present at residues 329 to 333 (DDFFD).

It belongs to the terpene synthase family. It depends on Mg(2+) as a cofactor.

The protein localises to the plastid. It localises to the chloroplast. The enzyme catalyses (+)-copalyl diphosphate = miltiradiene + diphosphate. It functions in the pathway secondary metabolite biosynthesis; terpenoid biosynthesis. Involved in the biosynthesis of ent-kaurene diterpenoids natural products such as oridonin, miltiradiene, eriocalyxin B and nezukol, known to exhibit antitumor, anti-inflammatory and antibacterial activities. Catalyzes the conversion of (+)-copalyl diphosphate ((+)-CPP) to miltiradiene. This Isodon japonicus (Scutellaria japonica) protein is Miltiradiene synthase KSL2, chloroplastic.